The chain runs to 445 residues: Trigger factor (445 aa).

The 86-residue stretch at 168–253 folds into the PPIase FKBP-type domain; it reads GDAVIVDFVG…IHEVRAPQTP (86 aa).

It belongs to the FKBP-type PPIase family. Tig subfamily.

It is found in the cytoplasm. The catalysed reaction is [protein]-peptidylproline (omega=180) = [protein]-peptidylproline (omega=0). In terms of biological role, involved in protein export. Acts as a chaperone by maintaining the newly synthesized protein in an open conformation. Functions as a peptidyl-prolyl cis-trans isomerase. The polypeptide is Trigger factor (Hyphomonas neptunium (strain ATCC 15444)).